A 345-amino-acid polypeptide reads, in one-letter code: Class I histocompatibility antigen, F10 alpha chain (345 aa).

An N-terminal signal peptide occupies residues Met-1–Pro-22. The tract at residues Glu-23–Gly-110 is alpha-1. The Extracellular segment spans residues Glu-23–Pro-301. 2 N-linked (GlcNAc...) asparagine glycosylation sites follow: Asn-59 and Asn-107. The segment at Gly-111 to Arg-201 is alpha-2. 2 disulfides stabilise this stretch: Cys-121/Cys-183 and Cys-221/Cys-277. The alpha-3 stretch occupies residues Glu-202–Trp-292. Residues Pro-204 to Glu-293 form the Ig-like C1-type domain. The segment at Glu-293–Pro-301 is connecting peptide. The chain crosses the membrane as a helical span at residues Ile-302 to Tyr-324. The Cytoplasmic portion of the chain corresponds to Arg-325–Ile-345.

Belongs to the MHC class I family. As to quaternary structure, heterodimer of an alpha chain and a beta chain (beta-2-microglobulin).

The protein resides in the membrane. Functionally, involved in the presentation of foreign antigens to the immune system. This Gallus gallus (Chicken) protein is Class I histocompatibility antigen, F10 alpha chain.